A 708-amino-acid polypeptide reads, in one-letter code: Ribosomal RNA large subunit methyltransferase K/L (708 aa).

In terms of domain architecture, THUMP spans 43-154; sequence QIYRCCLWSR…KENALLGIDM (112 aa).

Belongs to the methyltransferase superfamily. RlmKL family.

Its subcellular location is the cytoplasm. It carries out the reaction guanosine(2445) in 23S rRNA + S-adenosyl-L-methionine = N(2)-methylguanosine(2445) in 23S rRNA + S-adenosyl-L-homocysteine + H(+). The enzyme catalyses guanosine(2069) in 23S rRNA + S-adenosyl-L-methionine = N(2)-methylguanosine(2069) in 23S rRNA + S-adenosyl-L-homocysteine + H(+). In terms of biological role, specifically methylates the guanine in position 2445 (m2G2445) and the guanine in position 2069 (m7G2069) of 23S rRNA. This is Ribosomal RNA large subunit methyltransferase K/L from Vibrio cholerae serotype O1 (strain ATCC 39541 / Classical Ogawa 395 / O395).